Reading from the N-terminus, the 512-residue chain is NAD-dependent deacetylase sir2A (512 aa).

A UBP-type zinc finger spans residues 7-110; that stretch reads IECIHLKDEY…EILENIKSSN (104 aa). Positions 9, 11, 34, 37, 46, 49, 54, 61, 65, 71, 84, and 87 each coordinate Zn(2+). Positions 113–122 are enriched in basic and acidic residues; it reads DKIVPKKDQK. The interval 113–196 is disordered; sequence DKIVPKKDQK…DESSSEGEES (84 aa). Residues 130-175 are compositionally biased toward low complexity; sequence VVPSASITTSSTTTSISKQTTVNNTTTTSSSSTTTTTTTTSTTINN. The span at 176–195 shows a compositional bias: acidic residues; it reads NEEEEESESETDESSSEGEE. In terms of domain architecture, Deacetylase sirtuin-type spans 231–503; that stretch reads CVLKKPTIEE…LDLIKLLGWE (273 aa). His361 functions as the Proton acceptor in the catalytic mechanism. Positions 369, 372, 393, and 399 each coordinate Zn(2+).

It belongs to the sirtuin family. Zn(2+) is required as a cofactor.

It carries out the reaction N(6)-acetyl-L-lysyl-[protein] + NAD(+) + H2O = 2''-O-acetyl-ADP-D-ribose + nicotinamide + L-lysyl-[protein]. Its function is as follows. NAD-dependent deacetylase, which plays an important role in the regulation of transcriptional repression. In Dictyostelium discoideum (Social amoeba), this protein is NAD-dependent deacetylase sir2A (sir2A).